The sequence spans 328 residues: UPF0285 protein Mevan_1551 (328 aa).

This sequence belongs to the UPF0285 family.

The protein is UPF0285 protein Mevan_1551 of Methanococcus vannielii (strain ATCC 35089 / DSM 1224 / JCM 13029 / OCM 148 / SB).